A 391-amino-acid chain; its full sequence is Succinyl-diaminopimelate desuccinylase (391 aa).

H78 contacts Zn(2+). D80 is a catalytic residue. Position 111 (D111) interacts with Zn(2+). Residue E145 is the Proton acceptor of the active site. The Zn(2+) site is built by E146, E174, and H360.

This sequence belongs to the peptidase M20A family. DapE subfamily. In terms of assembly, homodimer. Zn(2+) serves as cofactor. Co(2+) is required as a cofactor.

It catalyses the reaction N-succinyl-(2S,6S)-2,6-diaminopimelate + H2O = (2S,6S)-2,6-diaminopimelate + succinate. It functions in the pathway amino-acid biosynthesis; L-lysine biosynthesis via DAP pathway; LL-2,6-diaminopimelate from (S)-tetrahydrodipicolinate (succinylase route): step 3/3. Its function is as follows. Catalyzes the hydrolysis of N-succinyl-L,L-diaminopimelic acid (SDAP), forming succinate and LL-2,6-diaminopimelate (DAP), an intermediate involved in the bacterial biosynthesis of lysine and meso-diaminopimelic acid, an essential component of bacterial cell walls. This Acidovorax ebreus (strain TPSY) (Diaphorobacter sp. (strain TPSY)) protein is Succinyl-diaminopimelate desuccinylase.